The sequence spans 358 residues: Putative glycylpeptide N-tetradecanoyltransferase (358 aa).

The protein belongs to the NMT family.

It catalyses the reaction N-terminal glycyl-[protein] + tetradecanoyl-CoA = N-tetradecanoylglycyl-[protein] + CoA + H(+). Functionally, adds a myristoyl group to the N-terminal glycine residue of certain proteins. This is Putative glycylpeptide N-tetradecanoyltransferase from Acanthamoeba polyphaga (Amoeba).